The following is a 686-amino-acid chain: Acyl-CoA synthetase short-chain family member 3, mitochondrial (686 aa).

A mitochondrion-targeting transit peptide spans 1–29 (MKPSWLQCHKVTSAGGLGGPLPGSSPARG). 227–230 (EPGR) is a binding site for CoA. ATP contacts are provided by residues 425–427 (GER) and 446–451 (DHWWQT). Residue K518 is modified to N6-succinyllysine. Residue K524 is modified to N6-acetyllysine. 3 residues coordinate ATP: D539, R554, and R565. A CoA-binding site is contributed by R624.

This sequence belongs to the ATP-dependent AMP-binding enzyme family.

Its subcellular location is the mitochondrion matrix. It catalyses the reaction acetate + ATP + CoA = acetyl-CoA + AMP + diphosphate. It carries out the reaction propanoate + ATP + CoA = propanoyl-CoA + AMP + diphosphate. The enzyme catalyses butanoate + ATP + CoA = butanoyl-CoA + AMP + diphosphate. In terms of biological role, catalyzes the synthesis of acetyl-CoA from short-chain fatty acids. Propionate is the preferred substrate but can also utilize acetate and butyrate with a much lower affinity. In Pongo abelii (Sumatran orangutan), this protein is Acyl-CoA synthetase short-chain family member 3, mitochondrial (ACSS3).